A 299-amino-acid polypeptide reads, in one-letter code: Leucine zipper transcription factor-like protein 1 (299 aa).

Positions 96–296 form a coiled coil; sequence LKLQTDISEL…DLRKRLAKYE (201 aa). Positions 145-299 are interaction with BSS9; sequence GAAELLNKEI…KRLAKYEPED (155 aa).

The protein belongs to the LZTFL1 family. In terms of assembly, self-associates. Interacts with BBS9; the interaction mediates the association of LZTL1 with the BBsome complex and regulates BBSome ciliary trafficking.

The protein resides in the cytoplasm. Functionally, regulates ciliary localization of the BBSome complex. Together with the BBSome complex, controls SMO ciliary trafficking and contributes to the sonic hedgehog (SHH) pathway regulation. May play a role in neurite outgrowth. May have tumor suppressor function. This chain is Leucine zipper transcription factor-like protein 1 (LZTFL1), found in Bos taurus (Bovine).